The primary structure comprises 251 residues: 5'-nucleotidase SurE (251 aa).

D8, D9, S39, and N91 together coordinate a divalent metal cation.

It belongs to the SurE nucleotidase family. It depends on a divalent metal cation as a cofactor.

It localises to the cytoplasm. The enzyme catalyses a ribonucleoside 5'-phosphate + H2O = a ribonucleoside + phosphate. Nucleotidase that shows phosphatase activity on nucleoside 5'-monophosphates. The protein is 5'-nucleotidase SurE of Nitrosococcus oceani (strain ATCC 19707 / BCRC 17464 / JCM 30415 / NCIMB 11848 / C-107).